Here is a 347-residue protein sequence, read N- to C-terminus: Olfactory receptor 13C3 (347 aa).

Over 1–55 (MIVQLICTVCFLAVNTFHVRSSFDFLKADDMGEINQTLVSEFLLLGLSGYPKIEI) the chain is Extracellular. Residue asparagine 35 is glycosylated (N-linked (GlcNAc...) asparagine). Residues 56–76 (VYFALILVMYLVILIGNGVLI) traverse the membrane as a helical segment. Residues 77-84 (IASIFDSH) are Cytoplasmic-facing. The helical transmembrane segment at 85–105 (FHTPMYFFLGNLSFLDICYTS) threads the bilayer. Residues 106–129 (SSVPSTLVSLISKKRNISFSGCAV) lie on the Extracellular side of the membrane. Cysteine 127 and cysteine 219 form a disulfide bridge. A helical membrane pass occupies residues 130–150 (QMFFGFAMGSTECLLLGMMAF). Over 151 to 169 (DRYVAICNPLRYPIILSKV) the chain is Cytoplasmic. A helical membrane pass occupies residues 170–190 (AYVLMASVSWLSGGINSAVQT). At 191–227 (LLAMRLPFCGNNIINHFACEILAVLKLACADISLNII) the chain is on the extracellular side. A helical transmembrane segment spans residues 228–247 (TMVISNMAFLVLPLMVIFFS). The Cytoplasmic portion of the chain corresponds to 248 to 267 (YMFILYTILQMNSATGRRKA). A helical transmembrane segment spans residues 268–288 (FSTCSAHLTVVIIFYGTIFFM). The Extracellular portion of the chain corresponds to 289 to 307 (YAKPKSQDLIGEEKLQALD). A helical transmembrane segment spans residues 308 to 328 (KLISLFYGVVTPMLNPILYSL). Over 329 to 347 (RNKDVKAAVKYLLNKKPIH) the chain is Cytoplasmic.

This sequence belongs to the G-protein coupled receptor 1 family.

It localises to the cell membrane. Odorant receptor. The sequence is that of Olfactory receptor 13C3 (OR13C3) from Homo sapiens (Human).